Reading from the N-terminus, the 223-residue chain is Keratin-associated protein 5-4 (223 aa).

14 consecutive repeat copies span residues 21–24 (CCKP), 27–30 (CCVP), 79–82 (CCKP), 89–92 (CCKP), 107–110 (CCKP), 117–120 (CCKP), 135–138 (CCKP), 145–148 (CCKP), 155–158 (CCKP), 173–176 (CCKP), 183–186 (CCKP), 193–196 (CCKP), 203–206 (CCKP), and 213–216 (CCAP). Residues 21–216 (CCKPVCCCVP…CCCQSSCCAP (196 aa)) are 14 X 4 AA repeats of C-C-X-P.

It belongs to the KRTAP type 5 family. In terms of assembly, interacts with hair keratins. As to expression, expressed during the active phases of the hair cycle in the medulla and the inner root sheath of the forming hair. Also expressed in the upper layers of the epidermis of skin.

Its function is as follows. In the hair cortex, hair keratin intermediate filaments are embedded in an interfilamentous matrix, consisting of hair keratin-associated protein (KRTAP), which are essential for the formation of a rigid and resistant hair shaft through their extensive disulfide bond cross-linking with abundant cysteine residues of hair keratins. The matrix proteins include the high-sulfur and high-glycine-tyrosine keratins. In Mus musculus (Mouse), this protein is Keratin-associated protein 5-4.